The chain runs to 146 residues: MYPAHLLVLLAVCVSLLGAASIPPQPLNLVQFSYLIQCANHGSRATWHYTDYGCYCGSGGSGTPVDELDRCCQTHDNCYAEAEKKGCYPKMSAYDYYCGENGPYCRNIKKECQRFVCDCDVEAAKCFARAPYNDANWNIDTKKRCQ.

The N-terminal stretch at Met1 to Ala19 is a signal peptide. Residues Ala20–Leu27 constitute a propeptide that is removed on maturation. Disulfide bonds link Cys38–Cys98, Cys54–Cys145, Cys56–Cys72, Cys71–Cys126, Cys78–Cys119, Cys87–Cys112, and Cys105–Cys117. 3 residues coordinate Ca(2+): Tyr55, Gly57, and Gly59. His75 is a catalytic residue. Position 76 (Asp76) interacts with Ca(2+). The active site involves Asp120.

Belongs to the phospholipase A2 family. Group I subfamily. D49 sub-subfamily. The cofactor is Ca(2+). As to expression, expressed by the venom gland.

The protein resides in the secreted. The catalysed reaction is a 1,2-diacyl-sn-glycero-3-phosphocholine + H2O = a 1-acyl-sn-glycero-3-phosphocholine + a fatty acid + H(+). Functionally, snake venom phospholipase A2 (PLA2) that inhibits collagen-induced platelet aggregation. PLA2 catalyzes the calcium-dependent hydrolysis of the 2-acyl groups in 3-sn-phosphoglycerides. This chain is Acidic phospholipase A2 S13-69J, found in Austrelaps superbus (Lowland copperhead snake).